A 514-amino-acid polypeptide reads, in one-letter code: Peptide chain release factor 3 (514 aa).

The region spanning 8–268 is the tr-type G domain; sequence KKRRTFAIIS…TFLKFAPEPH (261 aa). Residues 17–24, 85–89, and 139–142 each bind GTP; these read SHPDAGKT, DTPGH, and NKLD.

The protein belongs to the TRAFAC class translation factor GTPase superfamily. Classic translation factor GTPase family. PrfC subfamily.

It localises to the cytoplasm. In terms of biological role, increases the formation of ribosomal termination complexes and stimulates activities of RF-1 and RF-2. It binds guanine nucleotides and has strong preference for UGA stop codons. It may interact directly with the ribosome. The stimulation of RF-1 and RF-2 is significantly reduced by GTP and GDP, but not by GMP. The protein is Peptide chain release factor 3 of Streptococcus sanguinis (strain SK36).